A 318-amino-acid polypeptide reads, in one-letter code: NADH-ubiquinone oxidoreductase chain 1 (318 aa).

Transmembrane regions (helical) follow at residues 2–22 (FLIN…FLTL), 69–89 (LLFI…WLPI), 102–122 (ILFI…SGWA), 146–166 (LAII…SSLI), 171–191 (YMWI…STLA), 222–242 (LFFL…AILF), 253–273 (EMFT…FLWI), and 294–314 (LPLT…LSSI).

Belongs to the complex I subunit 1 family. Core subunit of respiratory chain NADH dehydrogenase (Complex I) which is composed of 45 different subunits.

It is found in the mitochondrion inner membrane. The enzyme catalyses a ubiquinone + NADH + 5 H(+)(in) = a ubiquinol + NAD(+) + 4 H(+)(out). Functionally, core subunit of the mitochondrial membrane respiratory chain NADH dehydrogenase (Complex I) which catalyzes electron transfer from NADH through the respiratory chain, using ubiquinone as an electron acceptor. Essential for the catalytic activity and assembly of complex I. The polypeptide is NADH-ubiquinone oxidoreductase chain 1 (MT-ND1) (Oryctolagus cuniculus (Rabbit)).